The following is a 228-amino-acid chain: 6-carboxyhexanoate--CoA ligase (228 aa).

The protein belongs to the BioW family. As to quaternary structure, homodimer. Mg(2+) serves as cofactor.

It carries out the reaction heptanedioate + ATP + CoA = 6-carboxyhexanoyl-CoA + AMP + diphosphate. Its pathway is metabolic intermediate metabolism; pimeloyl-CoA biosynthesis; pimeloyl-CoA from pimelate: step 1/1. Catalyzes the transformation of pimelate into pimeloyl-CoA with concomitant hydrolysis of ATP to AMP. In Staphylococcus epidermidis (strain ATCC 12228 / FDA PCI 1200), this protein is 6-carboxyhexanoate--CoA ligase.